Consider the following 683-residue polypeptide: Elongation factor G 1 (683 aa).

Residues 3–278 (DKMRNIGIMA…AVVDFLPAPN (276 aa)) enclose the tr-type G domain. GTP-binding positions include 12 to 19 (AHIDAGKT), 76 to 80 (DTPGH), and 130 to 133 (NKMD).

It belongs to the TRAFAC class translation factor GTPase superfamily. Classic translation factor GTPase family. EF-G/EF-2 subfamily.

It is found in the cytoplasm. Catalyzes the GTP-dependent ribosomal translocation step during translation elongation. During this step, the ribosome changes from the pre-translocational (PRE) to the post-translocational (POST) state as the newly formed A-site-bound peptidyl-tRNA and P-site-bound deacylated tRNA move to the P and E sites, respectively. Catalyzes the coordinated movement of the two tRNA molecules, the mRNA and conformational changes in the ribosome. This Treponema denticola (strain ATCC 35405 / DSM 14222 / CIP 103919 / JCM 8153 / KCTC 15104) protein is Elongation factor G 1.